The chain runs to 548 residues: Synaptic vesicle 2-related protein (548 aa).

Over 1-87 (MEEDLFQLRQ…GFGKFQWKLS (87 aa)) the chain is Cytoplasmic. A phosphoserine mark is found at S25 and S31. A helical transmembrane segment spans residues 88–108 (VLTGLAWMADAMEMMILSILA). At 109–122 (PQLHCEWRLPSWQV) the chain is on the vesicular side. Residues 123–143 (ALLTSVVFVGMMSSSTLWGNI) traverse the membrane as a helical segment. Over 144–156 (SDQYGRKTGLKIS) the chain is Cytoplasmic. The chain crosses the membrane as a helical span at residues 157-177 (VLWTLYYGILSAFAPVYSWIL). The Vesicular portion of the chain corresponds to 178 to 180 (VLR). The chain crosses the membrane as a helical span at residues 181-201 (GLVGFGIGGVPQSVTLYAEFL). Topologically, residues 202–209 (PMKARAKC) are cytoplasmic. The chain crosses the membrane as a helical span at residues 210–230 (ILLIEVFWAIGTVFEVVLAVF). Topologically, residues 231-238 (VMPSLGWR) are vesicular. Residues 239-259 (WLLILSAVPLLLFAVLCFWLP) traverse the membrane as a helical segment. Residues 260 to 316 (ESARYDVLSGNQEKAIATLKRIATENGAPMPLGKLIISRQEDRGKMRDLFTPHFRWT) are Cytoplasmic-facing. A helical transmembrane segment spans residues 317-337 (TLLLWFIWFSNAFSYYGLVLL). Over 338 to 373 (TTELFQAGDVCSISSRKKAVEAKCSLACEYLSEEDY) the chain is Vesicular. The helical transmembrane segment at 374–394 (MDLLWTTLSEFPGVLVTLWII) threads the bilayer. Residues 395–401 (DRLGRKK) are Cytoplasmic-facing. The chain crosses the membrane as a helical span at residues 402–422 (TMALCFVVFSFCSLLLFICVG). The Vesicular portion of the chain corresponds to 423–425 (RNM). Residues 426–446 (LTLLLFIARAFISGGFQAAYV) form a helical membrane-spanning segment. At 447–457 (YTPEVYPTATR) the chain is on the cytoplasmic side. Residues 458–478 (ALGLGTCSGMARVGALITPFI) traverse the membrane as a helical segment. The Vesicular portion of the chain corresponds to 479 to 489 (AQVMLESSVYL). Residues 490–510 (TLAVYSGCCLLAALASCFLPI) traverse the membrane as a helical segment. Residues 511-548 (ETKGRGLQESSHREWGQEMVGRGAHGTGVARSNSGSQE) lie on the Cytoplasmic side of the membrane. Positions 528-548 (EMVGRGAHGTGVARSNSGSQE) are disordered. Residue S542 is modified to Phosphoserine.

The protein belongs to the major facilitator superfamily. As to expression, detected in brain and adrenal medulla.

It localises to the cytoplasmic vesicle. Its subcellular location is the secretory vesicle. The protein resides in the synaptic vesicle membrane. This chain is Synaptic vesicle 2-related protein (SVOP), found in Bos taurus (Bovine).